A 321-amino-acid polypeptide reads, in one-letter code: uncharacterized protein (321 aa).

Topologically, residues 1-6 (MDIIRK) are extracellular. Residues 7–29 (ISHFAGQTFGIWVIVFAVLGFSF) traverse the membrane as a helical segment. At 30-34 (PSLFT) the chain is on the cytoplasmic side. The chain crosses the membrane as a helical span at residues 35–57 (WISSYITIFLGIIMFGMGLTLQA). At 58-69 (DDFKELVRKPWQ) the chain is on the extracellular side. The chain crosses the membrane as a helical span at residues 70–92 (VIIGVIAQYTIMPLVAFGLAFGL). Residues 93–97 (HLPAE) lie on the Cytoplasmic side of the membrane. The chain crosses the membrane as a helical span at residues 98–120 (IAVGVILVGCCPGGTASNVMTFL). The Extracellular segment spans residues 121–129 (AKGNTALSV). A helical transmembrane segment spans residues 130 to 150 (AVTTISTLLAPVVTPLLIMLF). Residues 151–159 (AKEWLPVSP) lie on the Cytoplasmic side of the membrane. The helical transmembrane segment at 160 to 180 (GSLFISILQAVLFPIIAGLIV) threads the bilayer. The Extracellular portion of the chain corresponds to 181-190 (KMFFRKQVAK). A helical transmembrane segment spans residues 191-211 (AVHALPLVSVIGIVAIVSAVV). At 212 to 221 (SGNRENLLQS) the chain is on the cytoplasmic side. Residues 222-242 (GLLIFSVVILHNGIGYLLGFL) form a helical membrane-spanning segment. Over 243 to 267 (CAKLLKMDYPSQKAIAIEVGMQNSG) the chain is Extracellular. The helical transmembrane segment at 268–288 (LGAALATAHFSPLSAVPSAIF) threads the bilayer. Residues 289-321 (SVWHNLSGSMLATYWSKKVKKKQAGSKSSNLSL) lie on the Cytoplasmic side of the membrane.

It belongs to the bile acid:sodium symporter (BASS) (TC 2.A.28) family.

The protein localises to the cell membrane. This is an uncharacterized protein from Bacillus subtilis (strain 168).